A 391-amino-acid chain; its full sequence is Chalcone synthase (391 aa).

Cys164 is an active-site residue.

The protein belongs to the thiolase-like superfamily. Chalcone/stilbene synthases family.

The enzyme catalyses (E)-4-coumaroyl-CoA + 3 malonyl-CoA + 3 H(+) = 2',4,4',6'-tetrahydroxychalcone + 3 CO2 + 4 CoA. Its pathway is secondary metabolite biosynthesis; flavonoid biosynthesis. Its function is as follows. The primary product of this enzyme is 4,2',4',6'-tetrahydroxychalcone (also termed naringenin-chalcone or chalcone) which can under specific conditions spontaneously isomerize into naringenin. The polypeptide is Chalcone synthase (CHS) (Dianthus caryophyllus (Carnation)).